A 129-amino-acid polypeptide reads, in one-letter code: Follitropin subunit beta (129 aa).

An N-terminal signal peptide occupies residues 1-18 (MKSVQLCLLLWCWRAICC). Intrachain disulfides connect cysteine 21/cysteine 69, cysteine 35/cysteine 84, cysteine 38/cysteine 122, cysteine 46/cysteine 100, cysteine 50/cysteine 102, and cysteine 105/cysteine 112. Residues asparagine 25 and asparagine 42 are each glycosylated (N-linked (GlcNAc...) asparagine).

This sequence belongs to the glycoprotein hormones subunit beta family. As to quaternary structure, heterodimer. The active follitropin is a heterodimer composed of an alpha chain/CGA shared with other hormones and a unique beta chain/FSHB shown here.

The protein resides in the secreted. Its function is as follows. Together with the alpha chain CGA constitutes follitropin, the follicle-stimulating hormone, and provides its biological specificity to the hormone heterodimer. Binds FSHR, a G protein-coupled receptor, on target cells to activate downstream signaling pathways. Follitropin is involved in follicle development and spermatogenesis in reproductive organs. The sequence is that of Follitropin subunit beta (FSHB) from Meriones unguiculatus (Mongolian jird).